The primary structure comprises 587 residues: GATA zinc finger domain-containing protein 3 (587 aa).

Positions 53 to 74 (NINNNINNNNNNNNNNNNNNIN) are enriched in low complexity. Disordered stretches follow at residues 53–141 (NINN…LKIP), 179–294 (QLAH…SSPS), and 312–392 (QTSP…ATIN). Polar residues predominate over residues 75–86 (QYHQNHYDQYSD). Low complexity-rich tracts occupy residues 87 to 136 (NNCN…NNNN), 183 to 202 (NSSMPNSPTSSNISPSTPTS), 237 to 264 (NINGNHHNNNNNINNNINNNVNNNINNG), 272 to 292 (GNNNNNNNIGVNGSGSSNSSS), and 316 to 333 (SQQSQQQQQQQQQQQQSQ). Polar residues-rich tracts occupy residues 340 to 358 (INTTEIHQRSNPSSATNSP) and 365 to 379 (NESSVENSPFTTPLS). Residues 500–525 (CIFCGTMETPEWRKGPGGHKTLCNAC) form a GATA-type zinc finger. The interval 536-587 (ENQNNGGSPNPQQNNVTTTTTTTTSTSTNSPNSNGNNFSPESAMSVSKLISD) is disordered. Positions 538–575 (QNNGGSPNPQQNNVTTTTTTTTSTSTNSPNSNGNNFSP) are enriched in low complexity. Positions 577-587 (SAMSVSKLISD) are enriched in polar residues.

The polypeptide is GATA zinc finger domain-containing protein 3 (gtaC) (Dictyostelium discoideum (Social amoeba)).